The chain runs to 265 residues: Urease accessory protein UreH (265 aa).

The protein belongs to the UreD family. In terms of assembly, ureH, UreF and UreG form a complex that acts as a GTP-hydrolysis-dependent molecular chaperone, activating the urease apoprotein by helping to assemble the nickel containing metallocenter of UreC. The UreE protein probably delivers the nickel.

It localises to the cytoplasm. Required for maturation of urease via the functional incorporation of the urease nickel metallocenter. This Helicobacter pylori (strain J99 / ATCC 700824) (Campylobacter pylori J99) protein is Urease accessory protein UreH.